A 308-amino-acid polypeptide reads, in one-letter code: Acetyl-coenzyme A carboxylase carboxyl transferase subunit beta (308 aa).

Positions valine 25–proline 294 constitute a CoA carboxyltransferase N-terminal domain. Residues cysteine 29, cysteine 32, cysteine 48, and cysteine 51 each contribute to the Zn(2+) site. The segment at cysteine 29 to cysteine 51 adopts a C4-type zinc-finger fold.

This sequence belongs to the AccD/PCCB family. In terms of assembly, acetyl-CoA carboxylase is a heterohexamer composed of biotin carboxyl carrier protein (AccB), biotin carboxylase (AccC) and two subunits each of ACCase subunit alpha (AccA) and ACCase subunit beta (AccD). The cofactor is Zn(2+).

It is found in the cytoplasm. The catalysed reaction is N(6)-carboxybiotinyl-L-lysyl-[protein] + acetyl-CoA = N(6)-biotinyl-L-lysyl-[protein] + malonyl-CoA. Its pathway is lipid metabolism; malonyl-CoA biosynthesis; malonyl-CoA from acetyl-CoA: step 1/1. Component of the acetyl coenzyme A carboxylase (ACC) complex. Biotin carboxylase (BC) catalyzes the carboxylation of biotin on its carrier protein (BCCP) and then the CO(2) group is transferred by the transcarboxylase to acetyl-CoA to form malonyl-CoA. The protein is Acetyl-coenzyme A carboxylase carboxyl transferase subunit beta of Vibrio vulnificus (strain CMCP6).